The chain runs to 102 residues: ATP-dependent Clp protease adapter protein ClpS (102 aa).

The protein belongs to the ClpS family. As to quaternary structure, binds to the N-terminal domain of the chaperone ClpA.

Its function is as follows. Involved in the modulation of the specificity of the ClpAP-mediated ATP-dependent protein degradation. This is ATP-dependent Clp protease adapter protein ClpS from Herminiimonas arsenicoxydans.